The following is a 103-amino-acid chain: Histone H4 (103 aa).

Positions 1–14 (MSGRGKGGKGLGKG) are enriched in gly residues. The interval 1–20 (MSGRGKGGKGLGKGGAKRHR) is disordered. Lys-6, Lys-9, Lys-13, Lys-17, Lys-32, and Lys-45 each carry N6-(2-hydroxyisobutyryl)lysine; alternate. Position 6 is an N6-acetyl-N6-methyllysine; alternate (Lys-6). Lys-6, Lys-9, Lys-13, Lys-17, Lys-32, and Lys-45 each carry N6-butyryllysine; alternate. At Lys-6 the chain carries N6-glutaryllysine; alternate. Lys-9 carries the post-translational modification N6-propionyllysine; alternate. The residue at position 13 (Lys-13) is an N6-acetyl-N6-methyllysine; alternate. The residue at position 13 (Lys-13) is an N6-glutaryllysine; alternate. Residues Lys-17, Lys-32, and Lys-45 each carry the N6-propionyllysine; alternate modification. Residues 17–21 (KRHRK) mediate DNA binding. At Lys-32 the chain carries N6-glutaryllysine; alternate. The residue at position 32 (Lys-32) is an N6-succinyllysine; alternate. An N6-glutaryllysine; alternate mark is found at Lys-60, Lys-78, Lys-80, and Lys-92. An N6-(2-hydroxyisobutyryl)lysine modification is found at Lys-60. Residues Lys-78, Lys-80, and Lys-92 each carry the N6-(2-hydroxyisobutyryl)lysine; alternate modification. Residues Lys-78, Lys-80, and Lys-92 each carry the N6-butyryllysine; alternate modification. An N6-propionyllysine; alternate mark is found at Lys-78, Lys-80, and Lys-92. Lys-78 carries the post-translational modification N6-succinyllysine. The residue at position 92 (Lys-92) is an N6-succinyllysine; alternate.

This sequence belongs to the histone H4 family. As to quaternary structure, the nucleosome is a histone octamer containing two molecules each of H2A, H2B, H3 and H4 assembled in one H3-H4 heterotetramer and two H2A-H2B heterodimers. The octamer wraps approximately 147 bp of DNA. Butyrylation of histones marks active promoters and competes with histone acetylation. Post-translationally, glutarylation at Lys-92 (H4K91glu) destabilizes nucleosomes by promoting dissociation of the H2A-H2B dimers from nucleosomes.

It is found in the nucleus. Its subcellular location is the chromosome. Core component of nucleosome. Nucleosomes wrap and compact DNA into chromatin, limiting DNA accessibility to the cellular machineries which require DNA as a template. Histones thereby play a central role in transcription regulation, DNA repair, DNA replication and chromosomal stability. DNA accessibility is regulated via a complex set of post-translational modifications of histones, also called histone code, and nucleosome remodeling. The sequence is that of Histone H4 (H4.1) from Oikopleura dioica (Tunicate).